Reading from the N-terminus, the 189-residue chain is Ornithine decarboxylase antizyme 2 (189 aa).

S186 is subject to Phosphoserine.

The protein belongs to the ODC antizyme family. Interacts with ODC1 and thereby sterically blocks ODC homodimerization. Interacts with AZIN2; this interaction disrupts the interaction between the antizyme and ODC1.

It is found in the nucleus. Its function is as follows. Ornithine decarboxylase (ODC) antizyme protein that negatively regulates ODC activity and intracellular polyamine biosynthesis and uptake in response to increased intracellular polyamine levels. Binds to ODC monomers, inhibiting the assembly of the functional ODC homodimers. Does not target the ODC monomers for degradation, which allows a protein synthesis-independent restoration of ODC activity. Involved in the translocation of AZIN2 from ER-Golgi intermediate compartment (ERGIC) to the cytosol. The chain is Ornithine decarboxylase antizyme 2 (Oaz2) from Mus musculus (Mouse).